A 391-amino-acid polypeptide reads, in one-letter code: B2 bradykinin receptor (391 aa).

At 1–60 (MFSPWKISMFLSVREDSVPTTASFSADMLNVTLQGPTLNGTFAQSKCPQVEWLGWLNTIQ) the chain is on the extracellular side. N-linked (GlcNAc...) asparagine glycosylation is found at Asn-30 and Asn-39. The helical transmembrane segment at 61-84 (PPFLWVLFVLATLENIFVLSVFCL) threads the bilayer. The Cytoplasmic portion of the chain corresponds to 85 to 93 (HKSSCTVAE). Residues 94–118 (IYLGNLAAADLILACGLPFWAITIS) form a helical membrane-spanning segment. Topologically, residues 119-131 (NNFDWLFGETLCR) are extracellular. Cys-130 and Cys-211 form a disulfide bridge. A helical transmembrane segment spans residues 132-153 (VVNAIISMNLYSSICFLMLVSI). Over 154-175 (DRYLALVKTMSMGRMRGVRWAK) the chain is Cytoplasmic. At Tyr-156 the chain carries Phosphotyrosine. Residues 176 to 198 (LYSLVIWGCTLLLSSPMLVFRTM) traverse the membrane as a helical segment. The Extracellular segment spans residues 199 to 221 (KEYSDEGHNVTACVISYPSLIWE). A glycan (N-linked (GlcNAc...) asparagine) is linked at Asn-207. A helical transmembrane segment spans residues 222–248 (VFTNMLLNVVGFLLPLSVITFCTMQIM). Over 249–267 (QVLRNNEMQKFKEIQTERR) the chain is Cytoplasmic. A helical membrane pass occupies residues 268–292 (ATVLVLVVLLLFIICWLPFQISTFL). Residues 293 to 311 (DTLHRLGILSSCQDERIID) lie on the Extracellular side of the membrane. The chain crosses the membrane as a helical span at residues 312-335 (VITQIASFMAYSNSCLNPLVYVIV). Over 336–391 (GKRFRKKSWEVYQGVCQKGGCRSEPIQMENSMGTLRTSISVERQIHKLQDWAGSRQ) the chain is Cytoplasmic. Tyr-347 is subject to Phosphotyrosine. Cys-351 carries the S-palmitoyl cysteine lipid modification. Ser-366 carries the phosphoserine modification. The residue at position 369 (Thr-369) is a Phosphothreonine. Residues Ser-373 and Ser-375 each carry the phosphoserine; by GRK6 modification.

Belongs to the G-protein coupled receptor 1 family. Bradykinin receptor subfamily. BDKRB2 sub-subfamily. In terms of assembly, forms a complex with PECAM1 and GNAQ. Interacts with PECAM1. As to expression, ubiquitous. Widespread in normal smooth muscle tissue and neurons.

Its subcellular location is the cell membrane. Functionally, receptor for bradykinin. It is associated with G proteins that activate a phosphatidylinositol-calcium second messenger system. This is B2 bradykinin receptor (BDKRB2) from Homo sapiens (Human).